Reading from the N-terminus, the 573-residue chain is Proline--tRNA ligase (573 aa).

This sequence belongs to the class-II aminoacyl-tRNA synthetase family. ProS type 1 subfamily. In terms of assembly, homodimer.

Its subcellular location is the cytoplasm. The enzyme catalyses tRNA(Pro) + L-proline + ATP = L-prolyl-tRNA(Pro) + AMP + diphosphate. Its function is as follows. Catalyzes the attachment of proline to tRNA(Pro) in a two-step reaction: proline is first activated by ATP to form Pro-AMP and then transferred to the acceptor end of tRNA(Pro). As ProRS can inadvertently accommodate and process non-cognate amino acids such as alanine and cysteine, to avoid such errors it has two additional distinct editing activities against alanine. One activity is designated as 'pretransfer' editing and involves the tRNA(Pro)-independent hydrolysis of activated Ala-AMP. The other activity is designated 'posttransfer' editing and involves deacylation of mischarged Ala-tRNA(Pro). The misacylated Cys-tRNA(Pro) is not edited by ProRS. This is Proline--tRNA ligase from Methylobacillus flagellatus (strain ATCC 51484 / DSM 6875 / VKM B-1610 / KT).